Here is a 426-residue protein sequence, read N- to C-terminus: D-tagatose-1,6-bisphosphate aldolase subunit KbaZ (426 aa).

Belongs to the GatZ/KbaZ family. KbaZ subfamily. In terms of assembly, forms a complex with KbaY.

It participates in carbohydrate metabolism; D-tagatose 6-phosphate degradation; D-glyceraldehyde 3-phosphate and glycerone phosphate from D-tagatose 6-phosphate: step 2/2. Functionally, component of the tagatose-1,6-bisphosphate aldolase KbaYZ that is required for full activity and stability of the Y subunit. Could have a chaperone-like function for the proper and stable folding of KbaY. When expressed alone, KbaZ does not show any aldolase activity. The polypeptide is D-tagatose-1,6-bisphosphate aldolase subunit KbaZ (Escherichia coli (strain SMS-3-5 / SECEC)).